The sequence spans 336 residues: Mitochondrial import receptor subunit TOM40 homolog (336 aa).

The tract at residues 1–58 (MGNVLAASSPAPPPAGSPPVPGLVSVPPGFTMPPVAGLTPTPDKKEPQEERLPNPGTF) is disordered. Pro residues predominate over residues 10-21 (PAPPPAGSPPVP). Positions 42–52 (PDKKEPQEERL) are enriched in basic and acidic residues.

The protein belongs to the Tom40 family. In terms of assembly, forms part of the preprotein translocase complex of the outer mitochondrial membrane (TOM complex). Interacts with mitochondrial targeting sequences.

The protein resides in the mitochondrion outer membrane. Its function is as follows. Channel-forming protein essential for import of protein precursors into mitochondria. This chain is Mitochondrial import receptor subunit TOM40 homolog (tomm40), found in Xenopus laevis (African clawed frog).